Consider the following 537-residue polypeptide: Exoglucanase 1 (537 aa).

An N-terminal signal peptide occupies residues 1–18 (MKGSISYQIYKGALLLSA). The catalytic stretch occupies residues 19–453 (LLNSVSAQQV…YVIYSNIKTG (435 aa)). A glycan (N-linked (GlcNAc...) asparagine) is linked at Asn-136. Glu-235 functions as the Nucleophile in the catalytic mechanism. The Proton donor role is filled by Glu-240. N-linked (GlcNAc...) asparagine glycans are attached at residues Asn-414 and Asn-456. Residues 454 to 477 (PLNSTFTGGTTSSSSTTTTTSKST) form a linker region. Low complexity predominate over residues 458–502 (TFTGGTTSSSSTTTTTSKSTSTSSSSKTTTTVTTTTTSSGSSGTG). A disordered region spans residues 458 to 503 (TFTGGTTSSSSTTTTTSKSTSTSSSSKTTTTVTTTTTSSGSSGTGA). One can recognise a CBM1 domain in the interval 501 to 537 (TGARDWAQCGGNGWTGPTTCVSPYTCTKQNDWYSQCL). Disulfide bonds link Cys-509/Cys-526 and Cys-520/Cys-536.

Belongs to the glycosyl hydrolase 7 (cellulase C) family.

It localises to the secreted. It catalyses the reaction Hydrolysis of (1-&gt;4)-beta-D-glucosidic linkages in cellulose and cellotetraose, releasing cellobiose from the non-reducing ends of the chains.. This is Exoglucanase 1 (cbh1) from Penicillium janthinellum (Penicillium vitale).